The primary structure comprises 450 residues: Phosphoglucosamine mutase (450 aa).

Ser-101 serves as the catalytic Phosphoserine intermediate. Residues Ser-101, Asp-242, Asp-244, and Asp-246 each contribute to the Mg(2+) site. Ser-101 carries the phosphoserine modification.

It belongs to the phosphohexose mutase family. Mg(2+) serves as cofactor. Post-translationally, activated by phosphorylation.

The catalysed reaction is alpha-D-glucosamine 1-phosphate = D-glucosamine 6-phosphate. Catalyzes the conversion of glucosamine-6-phosphate to glucosamine-1-phosphate. In Rhodopseudomonas palustris (strain TIE-1), this protein is Phosphoglucosamine mutase.